We begin with the raw amino-acid sequence, 618 residues long: Protease 4 (618 aa).

Residues methionine 1 to glutamate 24 are Cytoplasmic-facing. Residues methionine 25–isoleucine 45 form a helical membrane-spanning segment. The Periplasmic portion of the chain corresponds to glycine 46–arginine 618. Lysine 209 (proton donor/acceptor) is an active-site residue. Serine 409 functions as the Nucleophile in the catalytic mechanism.

Belongs to the peptidase S49 family. In terms of assembly, homotetramer.

It is found in the cell inner membrane. Its function is as follows. Digests cleaved signal peptides in vitro, its in vivo function is unknown. This activity is necessary to maintain proper secretion of mature proteins across the membrane. The protein is Protease 4 (sppA) of Salmonella typhi.